We begin with the raw amino-acid sequence, 198 residues long: MICOS complex subunit Mic26 (198 aa).

Positions 1–23 are cleaved as a signal peptide; it reads MFKVIQRSVGPASLSLLTFRVYA. N63 carries N-linked (GlcNAc...) asparagine glycosylation. The chain crosses the membrane as a helical span at residues 108-128; the sequence is PGFFPRLGVIGFAGFVGLLFA.

It belongs to the apolipoprotein O/MICOS complex subunit Mic27 family. In terms of assembly, component of the mitochondrial contact site and cristae organizing system (MICOS) complex, composed of at least MICOS10/MIC10, CHCHD3/MIC19, CHCHD6/MIC25, APOOL/MIC27, IMMT/MIC60, APOO/MIC23/MIC26 and MICOS13/MIC13. This complex was also known under the names MINOS or MitOS complex. The MICOS complex associates with mitochondrial outer membrane proteins SAMM50, MTX1 and MTX2 (together described as components of the mitochondrial outer membrane sorting assembly machinery (SAM) complex) and DNAJC11, mitochondrial inner membrane protein TMEM11 and with HSPA9. The MICOS and SAM complexes together with DNAJC11 are part of a large protein complex spanning both membranes termed the mitochondrial intermembrane space bridging (MIB) complex. Interacts with IMMT/MIC60. Interacts with MICOS10/MIC10 and APOOL/MIC27.

The protein localises to the mitochondrion inner membrane. The protein resides in the mitochondrion. Its subcellular location is the endoplasmic reticulum membrane. It is found in the golgi apparatus membrane. Its function is as follows. Component of the MICOS complex, a large protein complex of the mitochondrial inner membrane that plays crucial roles in the maintenance of crista junctions, inner membrane architecture, and formation of contact sites to the outer membrane. Plays a crucial role in crista junction formation and mitochondrial function. Can induce cardiac lipotoxicity by enhancing mitochondrial respiration and fatty acid metabolism in cardiac myoblasts. Promotes cholesterol efflux from macrophage cells. Detected in HDL, LDL and VLDL. Secreted by a microsomal triglyceride transfer protein (MTTP)-dependent mechanism, probably as a VLDL-associated protein that is subsequently transferred to HDL. The chain is MICOS complex subunit Mic26 (Apoo) from Mus musculus (Mouse).